Here is a 177-residue protein sequence, read N- to C-terminus: Large ribosomal subunit protein uL6 (177 aa).

Belongs to the universal ribosomal protein uL6 family. Part of the 50S ribosomal subunit.

This protein binds to the 23S rRNA, and is important in its secondary structure. It is located near the subunit interface in the base of the L7/L12 stalk, and near the tRNA binding site of the peptidyltransferase center. The sequence is that of Large ribosomal subunit protein uL6 from Cupriavidus taiwanensis (strain DSM 17343 / BCRC 17206 / CCUG 44338 / CIP 107171 / LMG 19424 / R1) (Ralstonia taiwanensis (strain LMG 19424)).